A 245-amino-acid chain; its full sequence is Superoxide dismutase 1 copper chaperone (245 aa).

Residues 8–71 (DFEATYAVEM…ALKNCGRDGI (64 aa)) enclose the HMA domain. The Cu cation site is built by cysteine 19 and cysteine 22. Cysteine 29 and cysteine 66 form a disulfide bridge. Residues cysteine 224 and cysteine 226 each coordinate Cu cation.

Belongs to the CCS1 family. Cu(2+) is required as a cofactor.

The protein localises to the cytoplasm. Its function is as follows. Copper chaperone for superoxide dismutase 1 (SOD1). Binds copper ions and delivers them specifically to SOD1. In Kluyveromyces lactis (strain ATCC 8585 / CBS 2359 / DSM 70799 / NBRC 1267 / NRRL Y-1140 / WM37) (Yeast), this protein is Superoxide dismutase 1 copper chaperone (CCS1).